The primary structure comprises 98 residues: Defensin-B (98 aa).

A signal peptide spans 1-20; the sequence is MKSITVICFLALCTVAITSA. Residues 21 to 58 constitute a propeptide that is removed on maturation; the sequence is YPQEPVLADEARPFANSLFDELPEETYQAAVENFRLKR. Disulfide bonds link cysteine 61/cysteine 88, cysteine 74/cysteine 94, and cysteine 78/cysteine 96.

Belongs to the invertebrate defensin family. Type 1 subfamily.

It is found in the secreted. In terms of biological role, antibacterial peptide mostly active against Gram-positive bacteria. The sequence is that of Defensin-B (DEFB) from Aedes aegypti (Yellowfever mosquito).